We begin with the raw amino-acid sequence, 120 residues long: Large ribosomal subunit protein bL19 (120 aa).

Belongs to the bacterial ribosomal protein bL19 family.

This protein is located at the 30S-50S ribosomal subunit interface and may play a role in the structure and function of the aminoacyl-tRNA binding site. The chain is Large ribosomal subunit protein bL19 from Chlorobium chlorochromatii (strain CaD3).